Consider the following 121-residue polypeptide: Large ribosomal subunit protein uL14 (121 aa).

It belongs to the universal ribosomal protein uL14 family. In terms of assembly, part of the 50S ribosomal subunit. Forms a cluster with proteins L3 and L19. In the 70S ribosome, L14 and L19 interact and together make contacts with the 16S rRNA in bridges B5 and B8.

In terms of biological role, binds to 23S rRNA. Forms part of two intersubunit bridges in the 70S ribosome. The sequence is that of Large ribosomal subunit protein uL14 from Synechococcus sp. (strain CC9311).